The sequence spans 174 residues: Large ribosomal subunit protein uL18 (174 aa).

The protein belongs to the universal ribosomal protein uL18 family. As to quaternary structure, part of the 50S ribosomal subunit. Contacts the 5S and 23S rRNAs.

In terms of biological role, this is one of the proteins that bind and probably mediate the attachment of the 5S RNA into the large ribosomal subunit, where it forms part of the central protuberance. The sequence is that of Large ribosomal subunit protein uL18 from Methanosarcina acetivorans (strain ATCC 35395 / DSM 2834 / JCM 12185 / C2A).